The chain runs to 169 residues: Ion-translocating oxidoreductase complex subunit B (169 aa).

Positions 1-23 (MIISIIIFSILSFILGVIVSLVS) are hydrophobic. One can recognise a 4Fe-4S domain in the interval 30–89 (SNLSLINDIDELLPQMQCAQCGYPGCYAYSQAIVDGNENIYKCIPGGKEVVLKLENLLNK). Residues cysteine 47, cysteine 50, cysteine 55, cysteine 72, cysteine 116, cysteine 119, cysteine 122, cysteine 126, cysteine 146, cysteine 149, cysteine 152, and cysteine 156 each contribute to the [4Fe-4S] cluster site. 4Fe-4S ferredoxin-type domains lie at 107–136 (SIVE…GTYN) and 137–166 (FRHT…KKIM).

Belongs to the 4Fe4S bacterial-type ferredoxin family. RnfB subfamily. The complex is composed of six subunits: RnfA, RnfB, RnfC, RnfD, RnfE and RnfG. The cofactor is [4Fe-4S] cluster.

It is found in the cell inner membrane. Its function is as follows. Part of a membrane-bound complex that couples electron transfer with translocation of ions across the membrane. This is Ion-translocating oxidoreductase complex subunit B from Buchnera aphidicola subsp. Baizongia pistaciae (strain Bp).